Reading from the N-terminus, the 272-residue chain is Shikimate dehydrogenase (NADP(+)) (272 aa).

Residues 14-16 (SKS) and Thr-61 each bind shikimate. Residue Lys-65 is the Proton acceptor of the active site. Glu-77 serves as a coordination point for NADP(+). Shikimate is bound by residues Asn-86 and Asp-102. NADP(+) is bound by residues 126–130 (GAGGA), 149–154 (NRTVSR), and Met-213. Tyr-215 is a binding site for shikimate. Gly-237 is an NADP(+) binding site.

Belongs to the shikimate dehydrogenase family. As to quaternary structure, homodimer.

It carries out the reaction shikimate + NADP(+) = 3-dehydroshikimate + NADPH + H(+). The protein operates within metabolic intermediate biosynthesis; chorismate biosynthesis; chorismate from D-erythrose 4-phosphate and phosphoenolpyruvate: step 4/7. Involved in the biosynthesis of the chorismate, which leads to the biosynthesis of aromatic amino acids. Catalyzes the reversible NADPH linked reduction of 3-dehydroshikimate (DHSA) to yield shikimate (SA). This is Shikimate dehydrogenase (NADP(+)) from Escherichia coli O6:H1 (strain CFT073 / ATCC 700928 / UPEC).